The following is an 861-amino-acid chain: MKRKHIMIYAASLLVSVLAHAFFVKEWAEGRYMTGPGDGLAQMIVFKKLLFDQYTHGNFFYNYSFGLGGGTFSQLGYYFSASFLFLAVSAAVWLLQAVQLIGETDTLFWAESAVFISIFKLSLIIFTSASVFHYLLKHRAASFTGAVLYGVSIIYFRHEAYWEFFTDTMVWLPLLVLGAEKIIRERRPAWFIVACSLTLINNFYFAYINLIFIGIYVLFRWLIRLEPHEEKRWIQIRLFLVSGFISFGISAAAFVPVVYGFLNNLRPPYSQKIEWLNFDDNILFSSRIIIVPAAFLLFLFIISFYKNRVFRLFAGLSLLFILFHFSPYAASVFNGFSAPQNRFEYVLAFTIAGAAAAGLSQLSELKRKELLPAAAVVLLLYLYHIQRYKLDIWKPANESILLLLLMTIAALFAAAFAKKRAKMAVYGIIILSSLFVANSYQKYALSEGGDLDSVTKEYLTSEEYRGRESSELIRRLQKEDDDPLMRIDWMNGVRNNTPIIYGFNGFSAYSSILNKDLLAFYWNDLSIDMGRESVSRYASLGDRANLYSLLYGKYYMTEKTNEASVPYGFKKHLETEHYAVYENQYMLPFVKTADAIYSESELDRLPALAKEQAMLKGIILKDPSGKTEQTPKPSNLITKSDITAKQAQYQNGLLTVTGENGGELIITPKQPSSAPGDYYVSFYLKSKAKDKGFTLKVNDYVTTRKSNKSIYKTGVNNITVRVPKSGHISINLPKGTYELRNIALYEENYQTLKNAVMQNKTEKADKLNWNKNRLTFSYHLSKDQYIMLPIPYEKGWELKINGKTQKIEKADYAFIGFKAQKGDNHIELTYYPPYFKISAIISLVSLLLAVFYIRRKKPGSI.

12 helical membrane passes run 4-24 (KHIMIYAASLLVSVLAHAFFV), 75-95 (LGYYFSASFLFLAVSAAVWLL), 106-126 (TLFWAESAVFISIFKLSLIIF), 159-179 (EAYWEFFTDTMVWLPLLVLGA), 199-219 (LINNFYFAYINLIFIGIYVLF), 238-258 (LFLVSGFISFGISAAAFVPVV), 282-302 (ILFSSRIIIVPAAFLLFLFII), 313-333 (FAGLSLLFILFHFSPYAASVF), 343-363 (FEYVLAFTIAGAAAAGLSQLS), 370-385 (LLPAAAVVLLLYLYHI), 396-416 (ANESILLLLLMTIAALFAAAF), and 425-445 (VYGIIILSSLFVANSYQKYAL). Residues 738-766 (ELRNIALYEENYQTLKNAVMQNKTEKADK) are a coiled coil. Residues 833–853 (PYFKISAIISLVSLLLAVFYI) traverse the membrane as a helical segment.

The protein localises to the cell membrane. This is an uncharacterized protein from Bacillus subtilis (strain 168).